A 700-amino-acid chain; its full sequence is Myb-related protein B (700 aa).

3 HTH myb-type domains span residues 26–77, 78–133, and 134–184; these read RDSK…LRVL, NPDL…NPEV, and KKSC…KRKV. The H-T-H motif DNA-binding region spans 54–77; it reads WKFLASHFPNRTDQQCQYRWLRVL. Residue Lys104 forms a Glycyl lysine isopeptide (Lys-Gly) (interchain with G-Cter in SUMO2) linkage. DNA-binding regions (H-T-H motif) lie at residues 106–129 and 157–180; these read WTLIAKHLKGRLGKQCRERWHNHL and WAEIAKMLPGRTDNAVKNHWNSTI. Glycyl lysine isopeptide (Lys-Gly) (interchain with G-Cter in SUMO2) cross-links involve residues Lys194 and Lys197. 2 disordered regions span residues 212-287 and 391-412; these read LQSA…PETS and PISPSTEVGGSGIGTPPSVLKR. A compositionally biased stretch (polar residues) spans 213-229; sequence QSAQPTEGQGSLLTNWP. Ser241 carries the phosphoserine modification. At Thr266 the chain carries Phosphothreonine. Lys275 participates in a covalent cross-link: Glycyl lysine isopeptide (Lys-Gly) (interchain with G-Cter in SUMO2). Phosphoserine is present on residues Ser282 and Ser393. A Glycyl lysine isopeptide (Lys-Gly) (interchain with G-Cter in SUMO2) cross-link involves residue Lys411. Positions 411 to 417 match the Nuclear localization signal motif; the sequence is KRQRKRR. Phosphothreonine; by CDK2 occurs at positions 440 and 444. Residues Lys447 and Lys482 each participate in a glycyl lysine isopeptide (Lys-Gly) (interchain with G-Cter in SUMO2) cross-link. Residues Thr487 and Thr494 each carry the phosphothreonine; by CDK2 modification. Lys499 is covalently cross-linked (Glycyl lysine isopeptide (Lys-Gly) (interchain with G-Cter in SUMO2)). Phosphothreonine is present on Thr505. Lys509 is covalently cross-linked (Glycyl lysine isopeptide (Lys-Gly) (interchain with G-Cter in SUMO2)). Thr520 is subject to Phosphothreonine; by CDK2. Residues Lys523, Lys533, and Lys546 each participate in a glycyl lysine isopeptide (Lys-Gly) (interchain with G-Cter in SUMO2) cross-link. Positions 564–584 match the Bipartite nuclear localization signal motif; it reads RPEKQKRKPGLRRSPIKKVRK. A Phosphoserine; by CDK2 modification is found at Ser577. Glycyl lysine isopeptide (Lys-Gly) (interchain with G-Cter in SUMO2) cross-links involve residues Lys584, Lys596, Lys625, Lys639, and Lys648.

In terms of assembly, component of the DREAM complex (also named LINC complex) at least composed of E2F4, E2F5, LIN9, LIN37, LIN52, LIN54, MYBL1, MYBL2, RBL1, RBL2, RBBP4, TFDP1 and TFDP2. The complex exists in quiescent cells where it represses cell cycle-dependent genes. It dissociates in S phase when LIN9, LIN37, LIN52 and LIN54 form a subcomplex that binds to MYBL22. Interacts with CCNF (via the Cyclin N-terminal domain). Post-translationally, phosphorylated by cyclin A/CDK2 during S-phase. Phosphorylation at Thr-520 is probably involved in transcriptional activity.

It is found in the nucleus. Functionally, transcription factor involved in the regulation of cell survival, proliferation, and differentiation. Transactivates the expression of the CLU gene. The protein is Myb-related protein B (MYBL2) of Homo sapiens (Human).